The primary structure comprises 115 residues: Glycine cleavage system H-like protein (115 aa).

In terms of domain architecture, Lipoyl-binding spans 17-99 (VVRLGLTEKM…EGEGWLAVVR (83 aa)). At Lys-58 the chain carries N6-lipoyllysine.

This sequence belongs to the GcvH family. The cofactor is (R)-lipoate.

This is Glycine cleavage system H-like protein from Chlamydia pneumoniae (Chlamydophila pneumoniae).